A 117-amino-acid polypeptide reads, in one-letter code: Minor capsid protein p17 (117 aa).

An N-linked (GlcNAc...) asparagine; by host glycan is attached at N12. The chain crosses the membrane as a helical span at residues 39–59; the sequence is AIILGILILLVIILIVVAIVY. N-linked (GlcNAc...) asparagine; by host glycosylation is found at N61 and N98. A disordered region spans residues 97-117; it reads KNSTTQQHIPSDEQLAELAHS.

This sequence belongs to the asfivirus minor capsid protein p17 family. Interacts with the minor capsid protein M1249L and with the hexon capsid protein p72 capsomers; these interactions form a rigid zipper structure that stabilizes the capsomers. Interacts with host STING1.

The protein resides in the virion membrane. Its subcellular location is the host endoplasmic reticulum membrane. Its function is as follows. Together with the penton and the other minor capsid proteins (M1249L, p49), forms a complicated network immediately below the outer capsid shell, stabilizing the whole capsid. Three copies of p17 encircle each p72 capsomer in the inner capsid shell, anchoring p72 capsomers on the inner membrane. Required for the assembly of the capsid and icosahedral morphogenesis. Additionally, inhibits the host cGAS-STING pathway through its interaction with STING1 and subsequent interference of the recruitment of downstream components TBK1 and IKBKE. The protein is Minor capsid protein p17 of Ornithodoros (relapsing fever ticks).